Consider the following 426-residue polypeptide: Histidine--tRNA ligase (426 aa).

This sequence belongs to the class-II aminoacyl-tRNA synthetase family. In terms of assembly, homodimer.

The protein resides in the cytoplasm. The enzyme catalyses tRNA(His) + L-histidine + ATP = L-histidyl-tRNA(His) + AMP + diphosphate + H(+). In Legionella pneumophila (strain Lens), this protein is Histidine--tRNA ligase.